Consider the following 469-residue polypeptide: Uronate isomerase (469 aa).

It belongs to the metallo-dependent hydrolases superfamily. Uronate isomerase family.

The enzyme catalyses D-glucuronate = D-fructuronate. It catalyses the reaction aldehydo-D-galacturonate = keto-D-tagaturonate. Its pathway is carbohydrate metabolism; pentose and glucuronate interconversion. This is Uronate isomerase from Rhizobium meliloti (strain 1021) (Ensifer meliloti).